The primary structure comprises 705 residues: Elongation factor G (705 aa).

A tr-type G domain is found at 8-294 (ELYRNFGIMA…SVIDYLPSPL (287 aa)). GTP is bound by residues 17–24 (AHIDAGKT), 92–96 (DTPGH), and 146–149 (NKMD).

It belongs to the TRAFAC class translation factor GTPase superfamily. Classic translation factor GTPase family. EF-G/EF-2 subfamily.

It localises to the cytoplasm. Functionally, catalyzes the GTP-dependent ribosomal translocation step during translation elongation. During this step, the ribosome changes from the pre-translocational (PRE) to the post-translocational (POST) state as the newly formed A-site-bound peptidyl-tRNA and P-site-bound deacylated tRNA move to the P and E sites, respectively. Catalyzes the coordinated movement of the two tRNA molecules, the mRNA and conformational changes in the ribosome. This is Elongation factor G from Cereibacter sphaeroides (strain KD131 / KCTC 12085) (Rhodobacter sphaeroides).